A 1129-amino-acid chain; its full sequence is CRISPR-associated endonuclease Cas12b (1129 aa).

A WED-I (OBD-I) domain region spans residues 1–14 (MAVKSIKVKLRLDD). Residues 4–9 (KSIKVK) form a binds sgRNA region. The REC1 (Helical-1)domain stretch occupies residues 15-386 (MPEIRAGLWK…FATFTLPDAT (372 aa)). Binds DNA protospacer adjacent motif (PAM) on target DNA regions lie at residues 118–122 (QQIAR) and 143–144 (GN). Positions 387–518 (AHPIWTRFDK…QSQSEARGER (132 aa)) are WED-II (OBD-II) domain. The interval 442 to 446 (SMSEQ) is binds sgRNA. The segment at 519–628 (RPPYAAVFRL…LLKLPGETES (110 aa)) is ruvC-I domain. Asp570 acts as the For DNase activity of RuvC domain in catalysis. The binds non-target ssDNA stretch occupies residues 573–574 (LR). Positions 629-658 (KDLRAIREERQRTLRQLRTQLAYLRLLVRC) are bridge helix domain. The segment at 659 to 784 (GSEDVGRRER…SFFGKVSGQV (126 aa)) is REC2 (Helical-II) domain. Binds sgRNA regions lie at residues 742-746 (RPKIR), 753-754 (VG), 792-796 (RFAIT), 800-819 (HIDHAKEDRLKKLADRIIME), and 835-839 (WVAKY). The tract at residues 785 to 900 (IRAEKGSRFA…GTMYAAFSSR (116 aa)) is ruvC-II domain. Glu848 (for DNase activity of RuvC domain) is an active-site residue. Residues 897 to 900 (FSSR) are binds non-target ssDNA. Phosphate contacts are provided by Ser899 and Arg911. Positions 901 to 974 (FDARTGAPGI…SAEEGDFHQI (74 aa)) are nuc-I domain. The binds sgRNA stretch occupies residues 973–978 (QIHADL). Residues 975-993 (HADLNAAQNLQQRLWSDFD) form a ruvC-III domain region. Asp977 functions as the For DNase activity of RuvC domain in the catalytic mechanism. Positions 994 to 1129 (ISQIRLRCDW…DSACENTGDI (136 aa)) are nuc-II domain.

The protein belongs to the CRISPR-associated endonuclease Cas12b family. As to quaternary structure, monomer. Requires a divalent metal cation as cofactor.

Its function is as follows. CRISPR (clustered regularly interspaced short palindromic repeat), is an adaptive immune system that provides protection against mobile genetic elements (viruses, transposable elements and conjugative plasmids). CRISPR clusters contain sequences complementary to antecedent mobile elements and target invading nucleic acids. CRISPR clusters are transcribed and processed into CRISPR RNA (crRNA). In type II CRISPR systems correct processing of pre-crRNA requires a trans-encoded small RNA (tracrRNA), endogenous ribonuclease 3 (rnc) and this protein. The tracrRNA serves as a guide for ribonuclease 3-aided processing of pre-crRNA. Protein-crRNA-tracrRNA endonucleolytically cleave dsDNA target complementary to the spacer; protein is inactive in the absence of crRNA homologous to the target and tracrRNA. Recognizes a short motif in the CRISPR repeat sequences (the 5' PAM or protospacer adjacent motif, TTN in this organism) to help distinguish self versus nonself, as targets within the bacterial CRISPR locus do not have PAMs. PAM recognition is also required for catalytic activity. Cleavage results in staggered 6-8 base 5'-overhangs 14-17 and 23-24 bases downstream of the PAM (protospacer adjacent motif) on the non-target and target strands respectively. Both target and non-target strand DNA are probably independently cleaved in the same active site. The protein is CRISPR-associated endonuclease Cas12b of Alicyclobacillus acidoterrestris (strain ATCC 49025 / DSM 3922 / CIP 106132 / NCIMB 13137 / GD3B).